The following is a 267-amino-acid chain: Acetyl-coenzyme A carboxylase carboxyl transferase subunit beta 1 (267 aa).

In terms of domain architecture, CoA carboxyltransferase N-terminal spans 9-267; that stretch reads TWQACPKCGR…NYGIGRSAHG (259 aa). The Zn(2+) site is built by Cys-13, Cys-16, Cys-31, and Cys-34. A C4-type zinc finger spans residues 13–34; sequence CPKCGRHVHQRQWGTYQQCPYC.

It belongs to the AccD/PCCB family. In terms of assembly, acetyl-CoA carboxylase is a heterohexamer composed of biotin carboxyl carrier protein (AccB), biotin carboxylase (AccC) and two subunits each of ACCase subunit alpha (AccA) and ACCase subunit beta (AccD). It depends on Zn(2+) as a cofactor.

It localises to the cytoplasm. It catalyses the reaction N(6)-carboxybiotinyl-L-lysyl-[protein] + acetyl-CoA = N(6)-biotinyl-L-lysyl-[protein] + malonyl-CoA. The protein operates within lipid metabolism; malonyl-CoA biosynthesis; malonyl-CoA from acetyl-CoA: step 1/1. In terms of biological role, component of the acetyl coenzyme A carboxylase (ACC) complex. Biotin carboxylase (BC) catalyzes the carboxylation of biotin on its carrier protein (BCCP) and then the CO(2) group is transferred by the transcarboxylase to acetyl-CoA to form malonyl-CoA. This Lactiplantibacillus plantarum (strain JDM1) (Lactobacillus plantarum) protein is Acetyl-coenzyme A carboxylase carboxyl transferase subunit beta 1.